The following is a 179-amino-acid chain: Large ribosomal subunit protein uL5 (179 aa).

This sequence belongs to the universal ribosomal protein uL5 family. Part of the 50S ribosomal subunit; part of the 5S rRNA/L5/L18/L25 subcomplex. Contacts the 5S rRNA and the P site tRNA. Forms a bridge to the 30S subunit in the 70S ribosome.

This is one of the proteins that bind and probably mediate the attachment of the 5S RNA into the large ribosomal subunit, where it forms part of the central protuberance. In the 70S ribosome it contacts protein S13 of the 30S subunit (bridge B1b), connecting the 2 subunits; this bridge is implicated in subunit movement. Contacts the P site tRNA; the 5S rRNA and some of its associated proteins might help stabilize positioning of ribosome-bound tRNAs. The chain is Large ribosomal subunit protein uL5 from Trichlorobacter lovleyi (strain ATCC BAA-1151 / DSM 17278 / SZ) (Geobacter lovleyi).